The following is a 141-amino-acid chain: Large ribosomal subunit protein uL11 (141 aa).

It belongs to the universal ribosomal protein uL11 family. Part of the ribosomal stalk of the 50S ribosomal subunit. Interacts with L10 and the large rRNA to form the base of the stalk. L10 forms an elongated spine to which L12 dimers bind in a sequential fashion forming a multimeric L10(L12)X complex. One or more lysine residues are methylated.

Its function is as follows. Forms part of the ribosomal stalk which helps the ribosome interact with GTP-bound translation factors. The chain is Large ribosomal subunit protein uL11 from Synechococcus sp. (strain CC9902).